The following is a 362-amino-acid chain: Meiotic recombination protein SPO11-1 (362 aa).

A Topo IIA-type catalytic domain is found at 8-142 (SESTNLLQRI…LNVVSVGNGL (135 aa)). Y103 acts as the O-(5'-phospho-DNA)-tyrosine intermediate in catalysis. Mg(2+) contacts are provided by E189 and D241.

This sequence belongs to the TOP6A family. In terms of assembly, heterotetramer of 2 SPO11 (SPO11-1 and/or SPO11-2) and 2 MTOPVIB chains. Interacts with MTOPVIB. May form a heterodimer with SPO11-2. Interacts with PRD1. Does not interact with TOP6B. The cofactor is Mg(2+). In terms of tissue distribution, expressed in shoots, young seedlings, flowers and reproductive tissues. Not found in roots or rosette leaves.

The protein localises to the nucleus. It catalyses the reaction ATP-dependent breakage, passage and rejoining of double-stranded DNA.. Its function is as follows. Component of a topoisomerase 6 complex specifically required for meiotic recombination. Together with MTOPVIB, mediates DNA cleavage that forms the double-strand breaks (DSB) that initiate meiotic recombination. The complex promotes relaxation of negative and positive supercoiled DNA and DNA decatenation through cleavage and ligation cycles. The polypeptide is Meiotic recombination protein SPO11-1 (Arabidopsis thaliana (Mouse-ear cress)).